A 687-amino-acid polypeptide reads, in one-letter code: MRQPLLKLAAVTRRFPAGDKDVVVLNNVNLSIHAGEIVAIVGASGSGKSTLMNILGCLDHPSEGTYTVGGRDTHMLDSDELAQLRREHFGFVFQRYHLLPHVDAVANLEMPAIYAGTPRAERHARARELLARLGLADRAHHRPGQLSGGQQQRVSIARALMNGGQVILADEPTGALDTKSGQDVIRILHELNALGHTIVIVTHDKAVARHAKRIIEISDGEIVADRPNRHYAEALAEAGVDAAEAAEASEAAVGESPTRNRHDTPAPPAAVDTDPHVDTGTRTRRFAAGSGRFAEACRMAWIALVSHRLRTLLTMLGIIIGITSVVSIVAIGEGAKRYMLDEIGSIGTNTINIYPGTDWGDSRADAIQTLVPADVAALTEQPYVDSATPETSRTLLLRYRNVDVNALVSGVGDRFFQARGMRFALGVAFDEDAVRRQVQVAVIDQNTRRKLFGATRNPIGEVILVDNVPCVVIGVTADKKSAFGSVKSLNVWVPYTTASGRLFGQRYLDSITVRVRDGQPSAAAEKSLEKLMTQRHGRKDFFTYNMDSVVKTVEKTGQSLTLLLSLIAVISLVVGGIGVMNIMLVSVTERTREIGIRMAVGARQSDILQQFLVEAVLVCLLGGTIGIALSFGLGALFSMFVAQWKMVFSAGAIVTAFVCSTLTGVIFGFMPARNASRLDPIDALARD.

The ABC transporter domain occupies 6-244; that stretch reads LKLAAVTRRF…LAEAGVDAAE (239 aa). Residue 42 to 49 participates in ATP binding; sequence GASGSGKS. Residues 246-256 show a composition bias toward low complexity; the sequence is AEASEAAVGES. Residues 246 to 281 are disordered; that stretch reads AEASEAAVGESPTRNRHDTPAPPAAVDTDPHVDTGT. A run of 4 helical transmembrane segments spans residues 312–332, 560–580, 617–637, and 650–670; these read LLTM…VAIG, LTLL…IGVM, LVCL…GALF, and AGAI…FGFM.

Belongs to the ABC transporter superfamily. Macrolide exporter (TC 3.A.1.122) family. Homodimer.

Its subcellular location is the cell inner membrane. Functionally, non-canonical ABC transporter that contains transmembrane domains (TMD), which form a pore in the inner membrane, and an ATP-binding domain (NBD), which is responsible for energy generation. Confers resistance against macrolides. The protein is Macrolide export ATP-binding/permease protein MacB of Burkholderia lata (strain ATCC 17760 / DSM 23089 / LMG 22485 / NCIMB 9086 / R18194 / 383).